Consider the following 102-residue polypeptide: Large ribosomal subunit protein bL21 (102 aa).

The protein belongs to the bacterial ribosomal protein bL21 family. In terms of assembly, part of the 50S ribosomal subunit. Contacts protein L20.

In terms of biological role, this protein binds to 23S rRNA in the presence of protein L20. This chain is Large ribosomal subunit protein bL21, found in Pediococcus pentosaceus (strain ATCC 25745 / CCUG 21536 / LMG 10740 / 183-1w).